A 438-amino-acid chain; its full sequence is Vasoactive intestinal polypeptide receptor 2 (438 aa).

A signal peptide spans 1 to 23 (MRTLLPPALLTCWLLAPVNSIHP). The Extracellular portion of the chain corresponds to 24–124 (ECRFHLEIQE…EDESKITFYI (101 aa)). Cystine bridges form between C38–C61, C52–C93, and C75–C109. N-linked (GlcNAc...) asparagine glycans are attached at residues N58, N88, and N92. The chain crosses the membrane as a helical span at residues 125 to 150 (LVKAIYTLGYSVSLMSLATGSIILCL). The Cytoplasmic portion of the chain corresponds to 151 to 158 (FRKLHCTR). The helical transmembrane segment at 159–180 (NYIHLNLFLSFILRAISVLVKD) threads the bilayer. At 181 to 203 (DVLYSSSGTLHCPDQPSSWVGCK) the chain is on the extracellular side. C202 and C271 are disulfide-bonded. A helical membrane pass occupies residues 204-228 (LSLVFLQYCIMANFFWLLVEGLYLH). At 229 to 239 (TLLVAMLPPRR) the chain is on the cytoplasmic side. A helical membrane pass occupies residues 240 to 261 (CFLAYLLIGWGLPTVCIGAWTA). The Extracellular segment spans residues 262–280 (ARLYLEDTGCWDTNDHSVP). Residues 281-304 (WWVIRIPILISIIVNFVLFISIIR) traverse the membrane as a helical segment. Topologically, residues 305–325 (ILLQKLTSPDVGGNDQSQYKR) are cytoplasmic. Residues 326-346 (LAKSTLLLIPLFGVHYMVFAV) traverse the membrane as a helical segment. Over 347-354 (FPISISSK) the chain is Extracellular. The chain crosses the membrane as a helical span at residues 355–378 (YQILFELCLGSFQGLVVAVLYCFL). Topologically, residues 379–438 (NSEVQCELKRKWRSRCPTPSASRDYRVCGSSFSRNGSEGALQFHRGSRAQSFLQTETSVI) are cytoplasmic.

Belongs to the G-protein coupled receptor 2 family. In terms of assembly, interacts with ADCYAP1/PACAP (via N-terminal extracellular domain); activated by PACAP27 and CAPAC38 neuropeptides. Interacts with VIP; the interaction results in VIPR1 activation. In terms of tissue distribution, expressed in CD4+ T-cells, but not in CD8+ T-cells. Expressed in the T-cell lines Jurkat, Peer, MOLT-4, HSB, YT and SUP-T1, but not in the T-cell lines HARRIS and HuT 78.

The protein localises to the cell membrane. Its function is as follows. G protein-coupled receptor activated by the neuropeptides vasoactive intestinal peptide (VIP) and pituitary adenylate cyclase-activating polypeptide (ADCYAP1/PACAP). Binds VIP and both PACAP27 and PACAP38 bioactive peptides with the following order of potency PACAP38 = VIP &gt; PACAP27. Ligand binding causes a conformation change that triggers signaling via guanine nucleotide-binding proteins (G proteins) and modulates the activity of downstream effectors. Activates cAMP-dependent pathway. May be coupled to phospholipase C. This Homo sapiens (Human) protein is Vasoactive intestinal polypeptide receptor 2.